Reading from the N-terminus, the 821-residue chain is Xylosyltransferase 1 (821 aa).

The interval 1-121 is disordered; sequence YFSHRPKEKV…PETKSDQVPK (121 aa). Residues 1–821 lie on the Lumenal side of the membrane; that stretch reads YFSHRPKEKV…GAVKPDGRLR (821 aa). Residues 9–25 show a composition bias toward basic and acidic residues; the sequence is KVRTDSNNENSVPKDFE. Residues 27-36 are compositionally biased toward polar residues; sequence VDNSNFAPRT. Basic and acidic residues-rich tracts occupy residues 41-58 and 76-87; these read HQPE…ERLQ and GPKEVLPPREKA. Asn-90 carries N-linked (GlcNAc...) asparagine glycosylation. 4 cysteine pairs are disulfide-bonded: Cys-122/Cys-150, Cys-166/Cys-407, Cys-426/Cys-439, and Cys-428/Cys-437. Residues Val-198, Asp-226, and 255-257 contribute to the UDP-alpha-D-xylose site; that span reads TIW. A glycan (N-linked (GlcNAc...) asparagine) is linked at Asn-286. 359–360 lines the UDP-alpha-D-xylose pocket; it reads DW. UDP-alpha-D-xylose is bound by residues Ser-440 and 463 to 464; that span reads RK. 2 cysteine pairs are disulfide-bonded: Cys-540-Cys-789 and Cys-782-Cys-795. The N-linked (GlcNAc...) asparagine glycan is linked to Asn-642. The interval 801–821 is disordered; it reads SSFSPDPKSELGAVKPDGRLR.

It belongs to the glycosyltransferase 14 family. XylT subfamily. As to quaternary structure, monomer. A divalent metal cation is required as a cofactor. Contains 7 disulfide bonds. Post-translationally, N-glycosylated.

The protein resides in the golgi apparatus membrane. The enzyme catalyses UDP-alpha-D-xylose + L-seryl-[protein] = 3-O-(beta-D-xylosyl)-L-seryl-[protein] + UDP + H(+). The protein operates within glycan metabolism; chondroitin sulfate biosynthesis. It functions in the pathway glycan metabolism; heparan sulfate biosynthesis. Its function is as follows. Catalyzes the first step in the biosynthesis of chondroitin sulfate and dermatan sulfate proteoglycans, such as DCN. Transfers D-xylose from UDP-D-xylose to specific serine residues of the core protein. Required for normal maturation of chondrocytes during bone development, normal onset of ossification and normal embryonic and postnatal skeleton development, especially of the long bones. This Rattus norvegicus (Rat) protein is Xylosyltransferase 1 (Xylt1).